Reading from the N-terminus, the 212-residue chain is Pyridoxine/pyridoxamine 5'-phosphate oxidase (212 aa).

Residues 8 to 11 (RTDY) and lysine 66 each bind substrate. FMN-binding positions include 61–66 (RIVLLK), 76–77 (FT), lysine 83, and glutamine 105. 3 residues coordinate substrate: tyrosine 123, arginine 127, and serine 131. Residues 140–141 (QS) and tryptophan 184 each bind FMN. 190–192 (RLH) serves as a coordination point for substrate. Arginine 194 serves as a coordination point for FMN.

The protein belongs to the pyridoxamine 5'-phosphate oxidase family. In terms of assembly, homodimer. It depends on FMN as a cofactor.

The enzyme catalyses pyridoxamine 5'-phosphate + O2 + H2O = pyridoxal 5'-phosphate + H2O2 + NH4(+). The catalysed reaction is pyridoxine 5'-phosphate + O2 = pyridoxal 5'-phosphate + H2O2. It participates in cofactor metabolism; pyridoxal 5'-phosphate salvage; pyridoxal 5'-phosphate from pyridoxamine 5'-phosphate: step 1/1. It functions in the pathway cofactor metabolism; pyridoxal 5'-phosphate salvage; pyridoxal 5'-phosphate from pyridoxine 5'-phosphate: step 1/1. In terms of biological role, catalyzes the oxidation of either pyridoxine 5'-phosphate (PNP) or pyridoxamine 5'-phosphate (PMP) into pyridoxal 5'-phosphate (PLP). This is Pyridoxine/pyridoxamine 5'-phosphate oxidase from Ralstonia pickettii (strain 12J).